Consider the following 508-residue polypeptide: Photosystem II CP47 reaction center protein (508 aa).

6 helical membrane-spanning segments follow: residues 21–36 (SVHIMHTALVSGWAGS), 101–115 (IVFSGLCFLASIWHW), 140–156 (GIHLFLSGVACFGFGAF), 203–218 (IAAGTLGILAGLFHLS), 237–252 (VLSSSIAAVFFAAFIV), and 457–472 (SFALLFFFGHIWHGAR).

It belongs to the PsbB/PsbC family. PsbB subfamily. PSII is composed of 1 copy each of membrane proteins PsbA, PsbB, PsbC, PsbD, PsbE, PsbF, PsbH, PsbI, PsbJ, PsbK, PsbL, PsbM, PsbT, PsbX, PsbY, PsbZ, Psb30/Ycf12, at least 3 peripheral proteins of the oxygen-evolving complex and a large number of cofactors. It forms dimeric complexes. It depends on Binds multiple chlorophylls. PSII binds additional chlorophylls, carotenoids and specific lipids. as a cofactor.

It is found in the plastid. The protein localises to the chloroplast thylakoid membrane. Functionally, one of the components of the core complex of photosystem II (PSII). It binds chlorophyll and helps catalyze the primary light-induced photochemical processes of PSII. PSII is a light-driven water:plastoquinone oxidoreductase, using light energy to abstract electrons from H(2)O, generating O(2) and a proton gradient subsequently used for ATP formation. This chain is Photosystem II CP47 reaction center protein, found in Amborella trichopoda.